The chain runs to 306 residues: Porphobilinogen deaminase (306 aa).

Residue C239 is modified to S-(dipyrrolylmethanemethyl)cysteine.

Belongs to the HMBS family. Monomer. The cofactor is dipyrromethane.

It catalyses the reaction 4 porphobilinogen + H2O = hydroxymethylbilane + 4 NH4(+). It participates in porphyrin-containing compound metabolism; protoporphyrin-IX biosynthesis; coproporphyrinogen-III from 5-aminolevulinate: step 2/4. Tetrapolymerization of the monopyrrole PBG into the hydroxymethylbilane pre-uroporphyrinogen in several discrete steps. The protein is Porphobilinogen deaminase of Helicobacter pylori (strain G27).